Here is a 215-residue protein sequence, read N- to C-terminus: Glutathione S-transferase D2 (215 aa).

Positions 1 to 80 (MDFYYMPGGG…YLVEKYGKDD (80 aa)) constitute a GST N-terminal domain. Residues 50–52 (HTI) and 64–66 (ESR) contribute to the glutathione site. Residues 86–212 (DPKKRAVINQ…MKALFDARKL (127 aa)) enclose the GST C-terminal domain.

It belongs to the GST superfamily. Delta family. As to quaternary structure, homodimer.

The enzyme catalyses RX + glutathione = an S-substituted glutathione + a halide anion + H(+). Conjugation of reduced glutathione to a wide number of exogenous and endogenous hydrophobic electrophiles. May be involved in detoxification. The protein is Glutathione S-transferase D2 of Drosophila melanogaster (Fruit fly).